We begin with the raw amino-acid sequence, 270 residues long: DNA packaging protein OPG160 (270 aa).

Position 55 to 62 (55 to 62 (VYNPDYDG)) interacts with ATP.

This sequence belongs to the orthopoxvirus OPG160 protein family. Interacts with protein OPG137.

In terms of biological role, participates in viral DNA packaging and virion morphogenesis. The polypeptide is DNA packaging protein OPG160 (OPG160) (Homo sapiens (Human)).